A 125-amino-acid polypeptide reads, in one-letter code: MRLSSTTFVVLAAVLLASGTAVSKADETGVTNVNAVHSPNVLAGVDKRFLRSHHTEDGKAKLSNYDNEERNGLFAAGTLSDMANDMIFRFKMFTKWKANGHLPKAIKKDIPRSLYKAYKIHHRMN.

The N-terminal stretch at 1 to 25 (MRLSSTTFVVLAAVLLASGTAVSKA) is a signal peptide. The RxLR-dEER signature appears at 48 to 70 (RFLRSHHTEDGKAKLSNYDNEER).

It belongs to the RxLR effector family.

The protein localises to the secreted. It is found in the host cell. Functionally, effector that suppresses plant defense responses during the early stages of pathogen infection. Suppresses cell death induced by effectors and PAMPs in plant hosts. Triggers a hypersensitive response (HR) in the presence of Rps1d. Suppresses BAX-induced cell death and enhanced P.capsici infection in Nicotiana benthamiana. Also suppresses effector-triggered immunity induction by associating with Avr1b and Rps1b, suggesting a role in suppressing plant immunity. In Phytophthora sojae (Soybean stem and root rot agent), this protein is RxLR effector protein Avh6.